The chain runs to 479 residues: Replication factor C large subunit (479 aa).

56-63 (GPPGVGKT) lines the ATP pocket. Residues 435–461 (LGEKPLEPQEAKARRRGEKASRDEGRK) show a composition bias toward basic and acidic residues. Residues 435–479 (LGEKPLEPQEAKARRRGEKASRDEGRKAGKRERKGVGLDFFLGEQ) are disordered.

This sequence belongs to the activator 1 small subunits family. RfcL subfamily. In terms of assembly, heteromultimer composed of small subunits (RfcS) and large subunits (RfcL).

Part of the RFC clamp loader complex which loads the PCNA sliding clamp onto DNA. This is Replication factor C large subunit from Aeropyrum pernix (strain ATCC 700893 / DSM 11879 / JCM 9820 / NBRC 100138 / K1).